The sequence spans 160 residues: Cytochrome b6-f complex subunit 4 (160 aa).

3 helical membrane passes run leucine 36–valine 56, leucine 95–glutamate 115, and alanine 131–isoleucine 151.

The protein belongs to the cytochrome b family. PetD subfamily. As to quaternary structure, the 4 large subunits of the cytochrome b6-f complex are cytochrome b6, subunit IV (17 kDa polypeptide, PetD), cytochrome f and the Rieske protein, while the 4 small subunits are PetG, PetL, PetM and PetN. The complex functions as a dimer.

It localises to the cellular thylakoid membrane. Component of the cytochrome b6-f complex, which mediates electron transfer between photosystem II (PSII) and photosystem I (PSI), cyclic electron flow around PSI, and state transitions. This chain is Cytochrome b6-f complex subunit 4, found in Trichodesmium erythraeum (strain IMS101).